The sequence spans 154 residues: Aspartate carbamoyltransferase regulatory chain (154 aa).

Zn(2+)-binding residues include Cys110, Cys115, Cys136, and Cys139.

It belongs to the PyrI family. As to quaternary structure, contains catalytic and regulatory chains. It depends on Zn(2+) as a cofactor.

Functionally, involved in allosteric regulation of aspartate carbamoyltransferase. This chain is Aspartate carbamoyltransferase regulatory chain, found in Halobacterium salinarum (strain ATCC 700922 / JCM 11081 / NRC-1) (Halobacterium halobium).